A 259-amino-acid chain; its full sequence is uncharacterized protein (259 aa).

An HD domain is found at 51 to 173 (GKTHAKIVAN…IAVADGTDMT (123 aa)).

This is an uncharacterized protein from Methanocaldococcus jannaschii (strain ATCC 43067 / DSM 2661 / JAL-1 / JCM 10045 / NBRC 100440) (Methanococcus jannaschii).